A 100-amino-acid polypeptide reads, in one-letter code: MRALTLLALLALATLCITGQAGAKPSGAESSKGAAFVSKQEGSEVVKRPRRYLYQWLGAPAPYPDPLEPKREVCELNPDCDELADHIGFQEAYRRFYGPV.

Positions 1–23 (MRALTLLALLALATLCITGQAGA) are cleaved as a signal peptide. Positions 24–51 (KPSGAESSKGAAFVSKQEGSEVVKRPRR) are excised as a propeptide. In terms of domain architecture, Gla spans 52–98 (YLYQWLGAPAPYPDPLEPKREVCELNPDCDELADHIGFQEAYRRFYG). Pro-60 bears the 4-hydroxyproline mark. 4 residues coordinate Ca(2+): Glu-68, Glu-72, Glu-75, and Asp-81. 4-carboxyglutamate is present on residues Glu-68, Glu-72, and Glu-75. Cys-74 and Cys-80 form a disulfide bridge.

This sequence belongs to the osteocalcin/matrix Gla protein family. Gamma-carboxyglutamate residues are formed by vitamin K dependent carboxylation by GGCX. These residues are essential for the binding of calcium. Decarboxylation promotes the hormone activity.

Its subcellular location is the secreted. The carboxylated form is one of the main organic components of the bone matrix, which constitutes 1-2% of the total bone protein: it acts as a negative regulator of bone formation and is required to limit bone formation without impairing bone resorption or mineralization. The carboxylated form binds strongly to apatite and calcium. Functionally, the uncarboxylated form acts as a hormone secreted by osteoblasts, which regulates different cellular processes, such as energy metabolism, male fertility and brain development. Regulates of energy metabolism by acting as a hormone favoring pancreatic beta-cell proliferation, insulin secretion and sensitivity and energy expenditure. Uncarboxylated osteocalcin hormone also promotes testosterone production in the testes: acts as a ligand for G protein-coupled receptor GPRC6A at the surface of Leydig cells, initiating a signaling response that promotes the expression of enzymes required for testosterone synthesis in a CREB-dependent manner. Also acts as a regulator of brain development: osteocalcin hormone crosses the blood-brain barrier and acts as a ligand for GPR158 on neurons, initiating a signaling response that prevents neuronal apoptosis in the hippocampus, favors the synthesis of all monoamine neurotransmitters and inhibits that of gamma-aminobutyric acid (GABA). Osteocalcin also crosses the placenta during pregnancy and maternal osteocalcin is required for fetal brain development. The chain is Osteocalcin (BGLAP) from Macaca mulatta (Rhesus macaque).